The chain runs to 507 residues: 3-octaprenyl-4-hydroxybenzoate carboxy-lyase (507 aa).

Asparagine 177 is a binding site for Mn(2+). Prenylated FMN is bound by residues 180 to 182 (IYR), 194 to 196 (RWL), and 199 to 200 (RG). Position 243 (glutamate 243) interacts with Mn(2+). Residue aspartate 302 is the Proton donor of the active site.

The protein belongs to the UbiD family. In terms of assembly, homohexamer. Requires prenylated FMN as cofactor. It depends on Mn(2+) as a cofactor.

The protein resides in the cell membrane. The enzyme catalyses a 4-hydroxy-3-(all-trans-polyprenyl)benzoate + H(+) = a 2-(all-trans-polyprenyl)phenol + CO2. It functions in the pathway cofactor biosynthesis; ubiquinone biosynthesis. In terms of biological role, catalyzes the decarboxylation of 3-octaprenyl-4-hydroxy benzoate to 2-octaprenylphenol, an intermediate step in ubiquinone biosynthesis. The protein is 3-octaprenyl-4-hydroxybenzoate carboxy-lyase of Cupriavidus metallidurans (strain ATCC 43123 / DSM 2839 / NBRC 102507 / CH34) (Ralstonia metallidurans).